A 167-amino-acid polypeptide reads, in one-letter code: Dimethylamine corrinoid protein 3 (167 aa).

A B12-binding N-terminal domain is found at 1 to 44 (MNEVGVRFERGKLFLPHVMMAADAMTAGVNALKDLMPEGSASSK). The B12-binding domain occupies 45–167 (MGVIVNGTVE…AVTKAKELLA (123 aa)). His-58 contacts methylcob(III)alamin.

Belongs to the methylamine corrinoid protein family.

It participates in one-carbon metabolism; methanogenesis from dimethylamine. Its function is as follows. Acts as a methyl group carrier between MtbB and MtbA. This chain is Dimethylamine corrinoid protein 3 (mtbC3), found in Methanosarcina mazei (strain ATCC BAA-159 / DSM 3647 / Goe1 / Go1 / JCM 11833 / OCM 88) (Methanosarcina frisia).